The sequence spans 257 residues: Outer membrane protein Omp26La (257 aa).

An N-terminal signal peptide occupies residues 1 to 19 (MKKIALFITASLIAGNTLA).

The protein belongs to the MipA/OmpV family.

Its subcellular location is the cell outer membrane. The polypeptide is Outer membrane protein Omp26La (Vibrio anguillarum (Listonella anguillarum)).